Here is a 140-residue protein sequence, read N- to C-terminus: Large ribosomal subunit protein bL17 (140 aa).

This sequence belongs to the bacterial ribosomal protein bL17 family. In terms of assembly, part of the 50S ribosomal subunit. Contacts protein L32.

In Rhizorhabdus wittichii (strain DSM 6014 / CCUG 31198 / JCM 15750 / NBRC 105917 / EY 4224 / RW1) (Sphingomonas wittichii), this protein is Large ribosomal subunit protein bL17.